The chain runs to 327 residues: Probable pectinesterase A (327 aa).

A signal peptide spans methionine 1–glycine 19. Asparagine 84 carries an N-linked (GlcNAc...) asparagine glycan. Glutamine 145 is a substrate binding site. Residue aspartate 168 is the Proton donor of the active site. Aspartate 189 acts as the Nucleophile in catalysis. Substrate contacts are provided by arginine 249 and tryptophan 251. An N-linked (GlcNAc...) asparagine glycan is attached at asparagine 288.

It belongs to the pectinesterase family.

The protein localises to the secreted. It carries out the reaction [(1-&gt;4)-alpha-D-galacturonosyl methyl ester](n) + n H2O = [(1-&gt;4)-alpha-D-galacturonosyl](n) + n methanol + n H(+). Its pathway is glycan metabolism; pectin degradation; 2-dehydro-3-deoxy-D-gluconate from pectin: step 1/5. In terms of biological role, involved in maceration and soft-rotting of plant tissue. The protein is Probable pectinesterase A (pmeA) of Aspergillus niger (strain ATCC MYA-4892 / CBS 513.88 / FGSC A1513).